The sequence spans 217 residues: Probable transaldolase (217 aa).

The active-site Schiff-base intermediate with substrate is the Lys83.

It belongs to the transaldolase family. Type 3B subfamily.

Its subcellular location is the cytoplasm. It catalyses the reaction D-sedoheptulose 7-phosphate + D-glyceraldehyde 3-phosphate = D-erythrose 4-phosphate + beta-D-fructose 6-phosphate. Its pathway is carbohydrate degradation; pentose phosphate pathway; D-glyceraldehyde 3-phosphate and beta-D-fructose 6-phosphate from D-ribose 5-phosphate and D-xylulose 5-phosphate (non-oxidative stage): step 2/3. Transaldolase is important for the balance of metabolites in the pentose-phosphate pathway. In Pseudothermotoga lettingae (strain ATCC BAA-301 / DSM 14385 / NBRC 107922 / TMO) (Thermotoga lettingae), this protein is Probable transaldolase.